The chain runs to 312 residues: Ribonuclease H2 subunit B (312 aa).

A2 is modified (N-acetylalanine). Residues 236–256 (EPSASLPNPPSKKIKLSDEPV) are disordered. K295 bears the N6-acetyllysine mark. A Phosphoserine modification is found at S296.

This sequence belongs to the RNase H2 subunit B family. In terms of assembly, the RNase H2 complex is a heterotrimer composed of the catalytic subunit RNASEH2A and the non-catalytic subunits RNASEH2B and RNASEH2C. Widely expressed.

The protein localises to the nucleus. Its function is as follows. Non catalytic subunit of RNase H2, an endonuclease that specifically degrades the RNA of RNA:DNA hybrids. Participates in DNA replication, possibly by mediating the removal of lagging-strand Okazaki fragment RNA primers during DNA replication. Mediates the excision of single ribonucleotides from DNA:RNA duplexes. The polypeptide is Ribonuclease H2 subunit B (RNASEH2B) (Homo sapiens (Human)).